Here is a 95-residue protein sequence, read N- to C-terminus: Toxin HigB-1 (95 aa).

Its function is as follows. Toxic component of a type II toxin-antitoxin (TA) system. Inhibits translation by cleavage of mRNA. The chain is Toxin HigB-1 (higB-1) from Vibrio cholerae serotype O1 (strain ATCC 39315 / El Tor Inaba N16961).